We begin with the raw amino-acid sequence, 130 residues long: Seminal plasma protein pB1 (130 aa).

An N-terminal signal peptide occupies residues 1–25 (MAPRLGIFLLWAGVSVFLPLDPVNG). Fibronectin type-II domains follow at residues 39–83 (TSDD…YCRS) and 84–130 (TDYA…WRYC). Disulfide bonds link Cys-44–Cys-68, Cys-58–Cys-81, Cys-89–Cys-115, and Cys-103–Cys-130.

The protein belongs to the seminal plasma protein family. In terms of tissue distribution, component of seminal plasma.

The protein localises to the secreted. Its function is as follows. May form a complex with spermadhesin AQN-1 which possesses phosphorylcholine-binding activity. This chain is Seminal plasma protein pB1, found in Sus scrofa (Pig).